We begin with the raw amino-acid sequence, 238 residues long: Uridylate kinase (238 aa).

12-15 contacts ATP; the sequence is KLSG. A UMP-binding site is contributed by G54. Residues G55 and R59 each coordinate ATP. UMP is bound by residues D74 and 135 to 142; that span reads TGNPFFTT. ATP contacts are provided by T162, Y168, and D171.

It belongs to the UMP kinase family. As to quaternary structure, homohexamer.

The protein resides in the cytoplasm. The catalysed reaction is UMP + ATP = UDP + ADP. Its pathway is pyrimidine metabolism; CTP biosynthesis via de novo pathway; UDP from UMP (UMPK route): step 1/1. Inhibited by UTP. In terms of biological role, catalyzes the reversible phosphorylation of UMP to UDP. This is Uridylate kinase from Bordetella bronchiseptica (strain ATCC BAA-588 / NCTC 13252 / RB50) (Alcaligenes bronchisepticus).